Reading from the N-terminus, the 86-residue chain is Exopolysaccharide production repressor protein (86 aa).

The chain crosses the membrane as a helical span at residues 18-38 (FAVTLAASVFLQVVYFLSLLF). The segment at 44–86 (TRESDRSIHSGTRQADQPQKRDRDKTEQSNVPKLDPRRKRRTP) is disordered. Residues 61 to 70 (PQKRDRDKTE) are compositionally biased toward basic and acidic residues.

The protein resides in the cell membrane. The protein operates within glycan metabolism; exopolysaccharide biosynthesis. Its function is as follows. Inhibition of exopolysaccharide synthesis (EPS) and nodulation ability (NOD). The sequence is that of Exopolysaccharide production repressor protein (exoX) from Rhizobium leguminosarum bv. phaseoli.